Consider the following 207-residue polypeptide: 2,3-bisphosphoglycerate-dependent phosphoglycerate mutase (207 aa).

Substrate-binding positions include 9–16 (RHGQSDWN), 22–23 (TG), R61, 88–91 (ERDY), K99, 115–116 (RR), and 159–160 (GN). Catalysis depends on H10, which acts as the Tele-phosphohistidine intermediate. Residue E88 is the Proton donor/acceptor of the active site.

Belongs to the phosphoglycerate mutase family. BPG-dependent PGAM subfamily. As to quaternary structure, homodimer.

It carries out the reaction (2R)-2-phosphoglycerate = (2R)-3-phosphoglycerate. Its pathway is carbohydrate degradation; glycolysis; pyruvate from D-glyceraldehyde 3-phosphate: step 3/5. In terms of biological role, catalyzes the interconversion of 2-phosphoglycerate and 3-phosphoglycerate. In Beijerinckia indica subsp. indica (strain ATCC 9039 / DSM 1715 / NCIMB 8712), this protein is 2,3-bisphosphoglycerate-dependent phosphoglycerate mutase.